Reading from the N-terminus, the 481-residue chain is Pyruvate kinase (481 aa).

R33 is a substrate binding site. K(+) contacts are provided by N35, S37, D67, and T68. Position 35 to 38 (35 to 38 (NFSH)) interacts with ATP. ATP is bound by residues R74 and K155. E221 provides a ligand contact to Mg(2+). Substrate-binding residues include G244, D245, and T277. Mg(2+) is bound at residue D245.

It belongs to the pyruvate kinase family. In terms of assembly, homotetramer. It depends on Mg(2+) as a cofactor. K(+) is required as a cofactor.

It carries out the reaction pyruvate + ATP = phosphoenolpyruvate + ADP + H(+). Its pathway is carbohydrate degradation; glycolysis; pyruvate from D-glyceraldehyde 3-phosphate: step 5/5. In Chlamydia muridarum (strain MoPn / Nigg), this protein is Pyruvate kinase (pyk).